Reading from the N-terminus, the 261-residue chain is Cytochrome c oxidase subunit 3 (261 aa).

At 1-15 (MTHQTHAYHMVNPSP) the chain is on the mitochondrial matrix side. The helical transmembrane segment at 16 to 34 (WPLTGALSALLMTSGLAMW) threads the bilayer. At 35–40 (FHFNST) the chain is on the mitochondrial intermembrane side. Residues 41 to 66 (ILLMIGLTTNTLTMYQWWRDVIREST) form a helical membrane-spanning segment. Over 67–72 (FQGHHT) the chain is Mitochondrial matrix. The chain crosses the membrane as a helical span at residues 73–105 (PTVQKGLRYGMILFIISEVLFFTGFFWAFYHSS). Residues 106-128 (LAPTPELGGCWPPTGIHPLNPLE) are Mitochondrial intermembrane-facing. The chain crosses the membrane as a helical span at residues 129-152 (VPLLNTSVLLASGVSITWAHHSLM). The Mitochondrial matrix portion of the chain corresponds to 153–155 (EGN). A helical membrane pass occupies residues 156–183 (RYPMLQALFITIALGVYFTLLQASEYYE). The Mitochondrial intermembrane segment spans residues 184–190 (APFTISD). The helical transmembrane segment at 191–223 (GVYGSTFFVATGFHGLHVIIGSTFLIVCFFRQL) threads the bilayer. The Mitochondrial matrix segment spans residues 224–232 (KFHFTSNHH). A helical membrane pass occupies residues 233–256 (FGFEAAAWYWHFVDVVWLFLYVSI). The Mitochondrial intermembrane portion of the chain corresponds to 257–261 (YWWGS).

The protein belongs to the cytochrome c oxidase subunit 3 family. Component of the cytochrome c oxidase (complex IV, CIV), a multisubunit enzyme composed of 14 subunits. The complex is composed of a catalytic core of 3 subunits MT-CO1, MT-CO2 and MT-CO3, encoded in the mitochondrial DNA, and 11 supernumerary subunits COX4I, COX5A, COX5B, COX6A, COX6B, COX6C, COX7A, COX7B, COX7C, COX8 and NDUFA4, which are encoded in the nuclear genome. The complex exists as a monomer or a dimer and forms supercomplexes (SCs) in the inner mitochondrial membrane with NADH-ubiquinone oxidoreductase (complex I, CI) and ubiquinol-cytochrome c oxidoreductase (cytochrome b-c1 complex, complex III, CIII), resulting in different assemblies (supercomplex SCI(1)III(2)IV(1) and megacomplex MCI(2)III(2)IV(2)).

It is found in the mitochondrion inner membrane. The catalysed reaction is 4 Fe(II)-[cytochrome c] + O2 + 8 H(+)(in) = 4 Fe(III)-[cytochrome c] + 2 H2O + 4 H(+)(out). In terms of biological role, component of the cytochrome c oxidase, the last enzyme in the mitochondrial electron transport chain which drives oxidative phosphorylation. The respiratory chain contains 3 multisubunit complexes succinate dehydrogenase (complex II, CII), ubiquinol-cytochrome c oxidoreductase (cytochrome b-c1 complex, complex III, CIII) and cytochrome c oxidase (complex IV, CIV), that cooperate to transfer electrons derived from NADH and succinate to molecular oxygen, creating an electrochemical gradient over the inner membrane that drives transmembrane transport and the ATP synthase. Cytochrome c oxidase is the component of the respiratory chain that catalyzes the reduction of oxygen to water. Electrons originating from reduced cytochrome c in the intermembrane space (IMS) are transferred via the dinuclear copper A center (CU(A)) of subunit 2 and heme A of subunit 1 to the active site in subunit 1, a binuclear center (BNC) formed by heme A3 and copper B (CU(B)). The BNC reduces molecular oxygen to 2 water molecules using 4 electrons from cytochrome c in the IMS and 4 protons from the mitochondrial matrix. The chain is Cytochrome c oxidase subunit 3 (MT-CO3) from Raphicerus campestris (Steenbok).